A 545-amino-acid chain; its full sequence is MNGIKHIFITGGVVSSIGKGLTAASLGSLLTMRGLKVFIKKLDPYLNVDPGTMNPLQHGEVFITEDGAETDLDVGHYERFLDVDLDRTANVTTGQVYSKVITLERTGRYLGETVQVIPHITDEIKRRIRLAPDDIDVIITEIGGTVGDIESQPFIEAARQIRREVGRENCCFIHVSLVPFLESAGEQKTKPTQHSVAILRAAGIQPDALVLRSDKPISSANQKKIALMCDVSAVVNAVTVPNIYEIPCVLNQHGLDKFVIKHLDLEAGEIDWSYWDDVLDAIENNRSEIEIAIIGKYTGLPDAYISVIEALRAGGFESKTKVNIKWVDSDDENLEDQLENINGACIPGGFGIRGIEGLIKAIRICREREIPTLGICLGMQCMVIEYARHVVGMHGASSTEFTDDTQWPVVTTMLEQRDILIDDQFGGTMRLGSYRAVLSIGSLAASLYGTTDIHERHRHRYEVNNGYAQRLVERGLIVSGRNTEQDLIEFIELDRKDHPFYIGTQAHPECKSRPKRPHPLFKGLVAAALARKEIAEFNSGKTVLQ.

The interval 1-265 is amidoligase domain; it reads MNGIKHIFIT…DKFVIKHLDL (265 aa). Position 15 (S15) interacts with CTP. Residue S15 participates in UTP binding. Residues 16 to 21 and D73 contribute to the ATP site; that span reads SIGKGL. 2 residues coordinate Mg(2+): D73 and E141. CTP is bound by residues 148 to 150, 188 to 193, and K224; these read DIE and KTKPTQ. UTP contacts are provided by residues 188-193 and K224; that span reads KTKPTQ. A Glutamine amidotransferase type-1 domain is found at 290 to 534; sequence EIAIIGKYTG…VAAALARKEI (245 aa). Residue G349 participates in L-glutamine binding. C376 functions as the Nucleophile; for glutamine hydrolysis in the catalytic mechanism. L-glutamine contacts are provided by residues 377–380, E400, and R460; that span reads LGMQ. Residues H507 and E509 contribute to the active site.

Belongs to the CTP synthase family. As to quaternary structure, homotetramer.

It catalyses the reaction UTP + L-glutamine + ATP + H2O = CTP + L-glutamate + ADP + phosphate + 2 H(+). The catalysed reaction is L-glutamine + H2O = L-glutamate + NH4(+). It carries out the reaction UTP + NH4(+) + ATP = CTP + ADP + phosphate + 2 H(+). It functions in the pathway pyrimidine metabolism; CTP biosynthesis via de novo pathway; CTP from UDP: step 2/2. Allosterically activated by GTP, when glutamine is the substrate; GTP has no effect on the reaction when ammonia is the substrate. The allosteric effector GTP functions by stabilizing the protein conformation that binds the tetrahedral intermediate(s) formed during glutamine hydrolysis. Inhibited by the product CTP, via allosteric rather than competitive inhibition. Its function is as follows. Catalyzes the ATP-dependent amination of UTP to CTP with either L-glutamine or ammonia as the source of nitrogen. Regulates intracellular CTP levels through interactions with the four ribonucleotide triphosphates. This is CTP synthase from Tropheryma whipplei (strain Twist) (Whipple's bacillus).